The primary structure comprises 225 residues: Adenylate kinase (225 aa).

Residue 10-15 (GSGKGT) participates in ATP binding. The tract at residues 30–59 (ESGAIFRENISKGTEIGKKAKEYIDRGDLV) is NMP. AMP contacts are provided by residues Ser-31, Arg-36, 57 to 59 (DLV), 85 to 88 (GFPR), and Gln-92. The LID stretch occupies residues 126 to 165 (GRRLCENDNNHPNNIFIDAIKPDGDKCRVCGGALSARSDD). Arg-127 is an ATP binding site. Arg-162 and Arg-174 together coordinate AMP. Pro-211 lines the ATP pocket.

This sequence belongs to the adenylate kinase family. As to quaternary structure, monomer.

The protein resides in the cytoplasm. It catalyses the reaction AMP + ATP = 2 ADP. Its pathway is purine metabolism; AMP biosynthesis via salvage pathway; AMP from ADP: step 1/1. Catalyzes the reversible transfer of the terminal phosphate group between ATP and AMP. Plays an important role in cellular energy homeostasis and in adenine nucleotide metabolism. The polypeptide is Adenylate kinase (Desulfatibacillum aliphaticivorans).